Reading from the N-terminus, the 168-residue chain is Pleiotrophin (168 aa).

Positions 1-32 (MQTPQYLQQRRKFAAAFLAFIFILAAVDTAEA) are cleaved as a signal peptide. Intrachain disulfides connect C47–C76, C55–C85, C62–C89, C99–C131, and C109–C141. Chondroitin sulfate binding regions lie at residues 92–99 (KKQFGAEC) and 123–131 (KRALHNADC). Residues 141-168 (CGKLTKSKPQAESKKKKKEGKKQEKMLD) are disordered. Positions 147–168 (SKPQAESKKKKKEGKKQEKMLD) are chondroitin sulfate A binding.

As to quaternary structure, interacts with ALK and NEK6. Interacts with PTPRZ1 (via chondroitin sulfate groups); promotes formation of homooligomers; oligomerization impairs tyrosine phosphatase activity. Forms a complex with PTPRZ1 and CTNNB1; this complex inactivates PTPRZ1 protein tyrosine phosphatase activity through PTN interaction and stimulates tyrosine phosphorylation of CTNNB1. Interacts with ITGB3 and ITGA5. Forms a complex with PTPRZ1 and integrin alpha-V/beta-3 (ITGAV:ITGB3) that stimulates endothelial cell migration through ITGB3 'Tyr-773' phosphorylation. Interacts with SDC3 (via heparan sulfate chains); this interaction mediates the neurite outgrowth-promoting signal from PTN to the cytoskeleton of growing neurites; this interaction mediates osteoblast recruitment. Interacts with GPC2 (via heparan sulfate); this interaction promotes neurite outgrowth through binding of PTN with chondroitin sulfate of proteoglycans, thereby releasing PTPRS of chondroitin sulfate proteoglycans (CSPGs) and leading to binding with heparan sulfate of GPC2. Phosphorylated by NEK6.

The protein localises to the secreted. Secreted growth factor that mediates its signal through cell-surface proteoglycan and non-proteoglycan receptors. Binds cell-surface proteoglycan receptor via their chondroitin sulfate (CS) groups. Thereby regulates many processes like cell proliferation, cell survival, cell growth, cell differentiation and cell migration in several tissues namely neuron and bone. Also plays a role in synaptic plasticity and learning-related behavior by inhibiting long-term synaptic potentiation. Binds PTPRZ1, leading to neutralization of the negative charges of the CS chains of PTPRZ1, inducing PTPRZ1 clustering, thereby causing the dimerization and inactivation of its phosphatase activity leading to increased tyrosine phosphorylation of each of the PTPRZ1 substrates like ALK, CTNNB1 or AFAP1L2 in order to activate the PI3K-AKT pathway. Through PTPRZ1 binding controls oligodendrocyte precursor cell differentiation by enhancing the phosphorylation of AFAP1L2 in order to activate the PI3K-AKT pathway. Forms a complex with PTPRZ1 and integrin alpha-V/beta-3 (ITGAV:ITGB3) that stimulates endothelial cell migration through SRC dephosphorylation and activation that consequently leads to ITGB3 'Tyr-773' phosphorylation. In adult hippocampus promotes dendritic arborization, spine development, and functional integration and connectivity of newborn granule neurons through ALK by activating AKT signaling pathway. Binds GPC2 and chondroitin sulfate proteoglycans (CSPGs) at the neuron surface, leading to abrogation of binding between PTPRS and CSPGs and neurite outgrowth promotion. Binds SDC3 and mediates bone formation by recruiting and attaching osteoblasts/osteoblast precursors to the sites for new bone deposition. Binds ALK and promotes cell survival and cell proliferation through MAPK pathway activation. Inhibits proliferation and enhances differentiation of neural stem cells by inhibiting FGF2-induced fibroblast growth factor receptor signaling pathway. Mediates regulatory mechanisms in normal hemostasis and in hematopoietic regeneration and in maintaining the balance of myeloid and lymphoid regeneration. In addition may play a role in the female reproductive system, auditory response and the progesterone-induced decidualization pathway. In Bos taurus (Bovine), this protein is Pleiotrophin.